The sequence spans 232 residues: uncharacterized protein (232 aa).

A helical transmembrane segment spans residues 10–32 (GLTIYLYPVIAWIILVTKIESGL).

It is found in the membrane. This is an uncharacterized protein from Archaeoglobus fulgidus (strain ATCC 49558 / DSM 4304 / JCM 9628 / NBRC 100126 / VC-16).